Reading from the N-terminus, the 149-residue chain is Nucleoside diphosphate kinase (149 aa).

The ATP site is built by Lys9, Phe57, Arg85, Thr91, Arg102, and Asn112. His115 acts as the Pros-phosphohistidine intermediate in catalysis.

It belongs to the NDK family. Homotetramer. Mg(2+) serves as cofactor.

It is found in the cytoplasm. The catalysed reaction is a 2'-deoxyribonucleoside 5'-diphosphate + ATP = a 2'-deoxyribonucleoside 5'-triphosphate + ADP. The enzyme catalyses a ribonucleoside 5'-diphosphate + ATP = a ribonucleoside 5'-triphosphate + ADP. Major role in the synthesis of nucleoside triphosphates other than ATP. The ATP gamma phosphate is transferred to the NDP beta phosphate via a ping-pong mechanism, using a phosphorylated active-site intermediate. This Heliobacterium modesticaldum (strain ATCC 51547 / Ice1) protein is Nucleoside diphosphate kinase.